The following is a 251-amino-acid chain: 5'-nucleotidase SurE (251 aa).

Residues Asp8, Asp9, Ser39, and Asn91 each contribute to the a divalent metal cation site.

It belongs to the SurE nucleotidase family. It depends on a divalent metal cation as a cofactor.

It is found in the cytoplasm. It catalyses the reaction a ribonucleoside 5'-phosphate + H2O = a ribonucleoside + phosphate. In terms of biological role, nucleotidase that shows phosphatase activity on nucleoside 5'-monophosphates. In Halorhodospira halophila (strain DSM 244 / SL1) (Ectothiorhodospira halophila (strain DSM 244 / SL1)), this protein is 5'-nucleotidase SurE.